A 108-amino-acid chain; its full sequence is Protein FMC1 homolog (108 aa).

Belongs to the FMC1 family.

This chain is Protein FMC1 homolog, found in Caenorhabditis elegans.